A 262-amino-acid polypeptide reads, in one-letter code: tRNA (guanine-N(7)-)-methyltransferase (262 aa).

The segment at 1-58 is disordered; sequence MLPQDTNTDPLPGDDAESASGKSADASQGTPNPGDEVAHPRRIRSFVRRAGRTSTGQQ. A compositionally biased stretch (basic residues) spans 40–51; that stretch reads PRRIRSFVRRAG. Positions 92, 117, 144, and 167 each coordinate S-adenosyl-L-methionine. Aspartate 167 is an active-site residue. Lysine 171 is a binding site for substrate. The interval 173-178 is interaction with RNA; the sequence is RHNKRR. Substrate-binding positions include aspartate 203 and 241 to 244; that span reads TKFE.

This sequence belongs to the class I-like SAM-binding methyltransferase superfamily. TrmB family.

The catalysed reaction is guanosine(46) in tRNA + S-adenosyl-L-methionine = N(7)-methylguanosine(46) in tRNA + S-adenosyl-L-homocysteine. Its pathway is tRNA modification; N(7)-methylguanine-tRNA biosynthesis. Its function is as follows. Catalyzes the formation of N(7)-methylguanine at position 46 (m7G46) in tRNA. The chain is tRNA (guanine-N(7)-)-methyltransferase from Cupriavidus metallidurans (strain ATCC 43123 / DSM 2839 / NBRC 102507 / CH34) (Ralstonia metallidurans).